The chain runs to 206 residues: Ion-translocating oxidoreductase complex subunit G (206 aa).

The helical transmembrane segment at 9-29 (GITLALFAAGSTGLTAAINQM) threads the bilayer. At threonine 174 the chain carries FMN phosphoryl threonine.

It belongs to the RnfG family. As to quaternary structure, the complex is composed of six subunits: RsxA, RsxB, RsxC, RsxD, RsxE and RsxG. It depends on FMN as a cofactor.

Its subcellular location is the cell inner membrane. Functionally, part of a membrane-bound complex that couples electron transfer with translocation of ions across the membrane. Required to maintain the reduced state of SoxR. Probably transfers electron from NAD(P)H to SoxR. This Escherichia coli (strain K12) protein is Ion-translocating oxidoreductase complex subunit G.